Reading from the N-terminus, the 244-residue chain is Aspartate/glutamate leucyltransferase (244 aa).

It belongs to the R-transferase family. Bpt subfamily.

The protein localises to the cytoplasm. It catalyses the reaction N-terminal L-glutamyl-[protein] + L-leucyl-tRNA(Leu) = N-terminal L-leucyl-L-glutamyl-[protein] + tRNA(Leu) + H(+). It carries out the reaction N-terminal L-aspartyl-[protein] + L-leucyl-tRNA(Leu) = N-terminal L-leucyl-L-aspartyl-[protein] + tRNA(Leu) + H(+). Functions in the N-end rule pathway of protein degradation where it conjugates Leu from its aminoacyl-tRNA to the N-termini of proteins containing an N-terminal aspartate or glutamate. The protein is Aspartate/glutamate leucyltransferase of Bordetella parapertussis (strain 12822 / ATCC BAA-587 / NCTC 13253).